The chain runs to 369 residues: Queuine tRNA-ribosyltransferase (369 aa).

The active-site Proton acceptor is the aspartate 89. Substrate contacts are provided by residues 89-93 (DSGGF), aspartate 142, glutamine 184, and glycine 211. Residues 242-248 (GGGSPEL) are RNA binding. Aspartate 261 serves as the catalytic Nucleophile. The segment at 266-270 (TRIAR) is RNA binding; important for wobble base 34 recognition. 4 residues coordinate Zn(2+): cysteine 299, cysteine 301, cysteine 304, and histidine 330.

The protein belongs to the queuine tRNA-ribosyltransferase family. As to quaternary structure, homodimer. Within each dimer, one monomer is responsible for RNA recognition and catalysis, while the other monomer binds to the replacement base PreQ1. It depends on Zn(2+) as a cofactor.

It carries out the reaction 7-aminomethyl-7-carbaguanine + guanosine(34) in tRNA = 7-aminomethyl-7-carbaguanosine(34) in tRNA + guanine. It participates in tRNA modification; tRNA-queuosine biosynthesis. Catalyzes the base-exchange of a guanine (G) residue with the queuine precursor 7-aminomethyl-7-deazaguanine (PreQ1) at position 34 (anticodon wobble position) in tRNAs with GU(N) anticodons (tRNA-Asp, -Asn, -His and -Tyr). Catalysis occurs through a double-displacement mechanism. The nucleophile active site attacks the C1' of nucleotide 34 to detach the guanine base from the RNA, forming a covalent enzyme-RNA intermediate. The proton acceptor active site deprotonates the incoming PreQ1, allowing a nucleophilic attack on the C1' of the ribose to form the product. After dissociation, two additional enzymatic reactions on the tRNA convert PreQ1 to queuine (Q), resulting in the hypermodified nucleoside queuosine (7-(((4,5-cis-dihydroxy-2-cyclopenten-1-yl)amino)methyl)-7-deazaguanosine). The sequence is that of Queuine tRNA-ribosyltransferase from Thermotoga maritima (strain ATCC 43589 / DSM 3109 / JCM 10099 / NBRC 100826 / MSB8).